A 472-amino-acid chain; its full sequence is Homeobox protein PKNOX2 (472 aa).

Residues 1 to 62 (MMQHASPAPA…STPVPSAPID (62 aa)) form a disordered region. Polar residues predominate over residues 26-38 (DSPQMTATAQPPS). The span at 46-56 (SAPSAAASTPV) shows a compositional bias: low complexity. An MEIS N-terminal domain is found at 96 to 179 (GSECITSASF…MHSDNLLRND (84 aa)). A DNA-binding region (homeobox) is located at residues 291-350 (KRGVLPKHATNIMRSWLFQHLMHPYPTEDEKRQIAAQTNLTLLQVNNWFINARRRILQPM). Disordered stretches follow at residues 351 to 371 (LDASNPDPAPKAKKIKSQHRP), 386 to 405 (QQQGGAPGTNPDGSINLDNL), and 422 to 472 (MAAH…DSLE). A compositionally biased stretch (basic residues) spans 361–371 (KAKKIKSQHRP). Acidic residues predominate over residues 429 to 454 (LDGTEEEDEDEMEEEEEEELEEEVDE).

It belongs to the TALE/MEIS homeobox family.

It localises to the nucleus. In Homo sapiens (Human), this protein is Homeobox protein PKNOX2 (PKNOX2).